We begin with the raw amino-acid sequence, 201 residues long: Large ribosomal subunit protein uL4 (201 aa).

The disordered stretch occupies residues 45–71 (AQKTRAEVTGSGKKPWRQKGTGRARAG).

Belongs to the universal ribosomal protein uL4 family. In terms of assembly, part of the 50S ribosomal subunit.

Functionally, one of the primary rRNA binding proteins, this protein initially binds near the 5'-end of the 23S rRNA. It is important during the early stages of 50S assembly. It makes multiple contacts with different domains of the 23S rRNA in the assembled 50S subunit and ribosome. In terms of biological role, forms part of the polypeptide exit tunnel. This is Large ribosomal subunit protein uL4 from Shewanella halifaxensis (strain HAW-EB4).